Reading from the N-terminus, the 2364-residue chain is Cytotoxin-L (2364 aa).

The interval M1–L91 is four-helical bundle. A GT44 domain is found at K96 to L468. The glucosyltransferase region stretch occupies residues K96–L468. UDP-alpha-D-glucose is bound by residues I101–I103, N139, L265–D270, and D286–D288. Mg(2+)-binding residues include D288, E515, and S518. Position 518 to 520 (S518 to W520) interacts with UDP-alpha-D-glucose. Residues G544–T799 are autoprocessing region. Zn(2+) contacts are provided by E545 and D546. The Peptidase C80 domain occupies L567 to S774. Residues Y577, K600, and K647 each contribute to the 1D-myo-inositol hexakisphosphate site. H653 provides a ligand contact to Zn(2+). The For protease activity role is filled by H653. The active-site Nucleophile; for protease activity is the C698. H757 serves as a coordination point for Zn(2+). 1D-myo-inositol hexakisphosphate is bound by residues K764, K775, and K792. Residues L800–P1500 form a translocation region region. Interaction with host SEMA6A and SEMA6B stretches follow at residues C1433–E1438, D1466–Y1471, F1484–R1495, N1504–K1511, and Y1596–P1601. Cell wall-binding repeat units follow at residues E1813–M1832, V1833–N1852, I1854–G1873, S1876–L1895, F1926–A1945, A1946–E1965, L1967–M1986, Q1987–M2006, Q2007–R2026, Y2057–A2076, V2077–E2097, C2099–R2118, Q2119–I2138, E2139–V2158, E2209–P2224, K2227–M2249, R2250–M2269, Q2270–M2289, Y2320–A2339, and A2340–E2359. Residues G1835–E2364 are receptor-binding (CROPS) region.

It belongs to the clostridial glucosylating toxin (LCGT) family. Homomultimer; forms an inactive homomultimer at pH 8, which dissociates at pH 4, leading to cytotoxicity. Interacts with host SEMA6A; interaction promotes toxin entry into host cell. Interacts with host SEMA6B; interaction promotes toxin entry into host cell. Requires Zn(2+) as cofactor. It depends on Mn(2+) as a cofactor. The cofactor is Mg(2+). Undergoes autocatalytic cleavage to release the N-terminal part (Glucosyltransferase TcsL), which constitutes the active part of the toxin, in the host cytosol. 1D-myo-inositol hexakisphosphate-binding (InsP6) activates the peptidase C80 domain and promotes autoprocessing.

The protein localises to the secreted. It is found in the host endosome membrane. It localises to the host cytoplasm. The protein resides in the host cytosol. Its subcellular location is the host cell membrane. The catalysed reaction is L-threonyl-[protein] + UDP-alpha-D-glucose = 3-O-(alpha-D-glucosyl)-L-threonyl-[protein] + UDP + H(+). With respect to regulation, protease activity is activated upon binding to 1D-myo-inositol hexakisphosphate (InsP6), which induces conformational reorganization. In terms of biological role, precursor of a cytotoxin that targets the vascular endothelium, inducing an anti-inflammatory effect and resulting in lethal toxic shock syndrome. TcsL constitutes the main toxin that mediates the pathology of P.sordellii infection, an anaerobic Gram-positive bacterium found in soil and in the gastrointestinal and vaginal tracts of animals and humans; although the majority of carriers are asymptomatic, pathogenic P.sordellii infections arise rapidly and are highly lethal. This form constitutes the precursor of the toxin: it enters into host cells and mediates autoprocessing to release the active toxin (Glucosyltransferase TcsL) into the host cytosol. Targets vascular endothelium by binding to the semaphorin proteins SEMA6A and SEMA6B, and enters host cells via clathrin-mediated endocytosis. Once entered into host cells, acidification in the endosome promotes the membrane insertion of the translocation region and formation of a pore, leading to translocation of the GT44 and peptidase C80 domains across the endosomal membrane. This activates the peptidase C80 domain and autocatalytic processing, releasing the N-terminal part (Glucosyltransferase TcsL), which constitutes the active part of the toxin, in the cytosol. Functionally, active form of the toxin, which is released into the host cytosol following autoprocessing and inactivates small GTPases. Acts by mediating monoglucosylation of small GTPases of the Ras (H-Ras/HRAS, K-Ras/KRAS and N-Ras/NRAS) family in host cells at the conserved threonine residue located in the switch I region ('Thr-37/35'), using UDP-alpha-D-glucose as the sugar donor. Also able to catalyze monoglucosylation of some members of the Rho family (Rac1 and Rap2A), but with less efficiency than with Ras proteins. Monoglucosylation of host small GTPases completely prevents the recognition of the downstream effector, blocking the GTPases in their inactive form and leading to apoptosis. Induces an anti-inflammatory effect, mainly by inactivating Ras proteins which results in blockage of the cell cycle and killing of immune cells. The absence or moderate local inflammatory response allows C.sordellii spreading in deep tissues, production of toxin which is released in the general circulation and causes a toxic shock syndrome. This Paraclostridium sordellii (strain ATCC 9714 / DSM 2141 / JCM 3814 / LMG 15708 / NCIMB 10717 / 211) (Clostridium sordellii) protein is Cytotoxin-L.